The sequence spans 289 residues: ATP synthase gamma chain (289 aa).

Belongs to the ATPase gamma chain family. F-type ATPases have 2 components, CF(1) - the catalytic core - and CF(0) - the membrane proton channel. CF(1) has five subunits: alpha(3), beta(3), gamma(1), delta(1), epsilon(1). CF(0) has three main subunits: a, b and c.

It is found in the cell membrane. Produces ATP from ADP in the presence of a proton gradient across the membrane. The gamma chain is believed to be important in regulating ATPase activity and the flow of protons through the CF(0) complex. The protein is ATP synthase gamma chain of Mycoplasmoides gallisepticum (strain R(low / passage 15 / clone 2)) (Mycoplasma gallisepticum).